Reading from the N-terminus, the 226-residue chain is Thiopurine S-methyltransferase (226 aa).

Residues Trp16, Met51, Glu72, and Arg131 each coordinate S-adenosyl-L-methionine.

The protein belongs to the class I-like SAM-binding methyltransferase superfamily. TPMT family.

The protein localises to the cytoplasm. The enzyme catalyses S-adenosyl-L-methionine + a thiopurine = S-adenosyl-L-homocysteine + a thiopurine S-methylether.. This chain is Thiopurine S-methyltransferase, found in Francisella tularensis subsp. tularensis (strain SCHU S4 / Schu 4).